The chain runs to 205 residues: Holliday junction branch migration complex subunit RuvA (205 aa).

Positions 1 to 64 are domain I; that stretch reads MIGKLRGLID…EDQIKLFGFR (64 aa). The tract at residues 65 to 143 is domain II; it reads SDVEREWFRL…AFANVDPGVV (79 aa). Positions 144–154 are flexible linker; sequence RLSGAIEESRA. Positions 154-205 are domain III; that stretch reads APQPVADAISALINLGYGQPQAAAAIAAASRAAGDKAETAQLIRLGLKELAK.

The protein belongs to the RuvA family. As to quaternary structure, homotetramer. Forms an RuvA(8)-RuvB(12)-Holliday junction (HJ) complex. HJ DNA is sandwiched between 2 RuvA tetramers; dsDNA enters through RuvA and exits via RuvB. An RuvB hexamer assembles on each DNA strand where it exits the tetramer. Each RuvB hexamer is contacted by two RuvA subunits (via domain III) on 2 adjacent RuvB subunits; this complex drives branch migration. In the full resolvosome a probable DNA-RuvA(4)-RuvB(12)-RuvC(2) complex forms which resolves the HJ.

It localises to the cytoplasm. Functionally, the RuvA-RuvB-RuvC complex processes Holliday junction (HJ) DNA during genetic recombination and DNA repair, while the RuvA-RuvB complex plays an important role in the rescue of blocked DNA replication forks via replication fork reversal (RFR). RuvA specifically binds to HJ cruciform DNA, conferring on it an open structure. The RuvB hexamer acts as an ATP-dependent pump, pulling dsDNA into and through the RuvAB complex. HJ branch migration allows RuvC to scan DNA until it finds its consensus sequence, where it cleaves and resolves the cruciform DNA. The sequence is that of Holliday junction branch migration complex subunit RuvA from Bradyrhizobium sp. (strain ORS 278).